We begin with the raw amino-acid sequence, 424 residues long: Elongation factor 1-alpha (424 aa).

In terms of domain architecture, tr-type G spans 5–223 (KPHMNLVIIG…NALQVPAKPV (219 aa)). A G1 region spans residues 14–21 (GHVDHGKS). 14-21 (GHVDHGKS) contacts GTP. Position 21 (Ser-21) interacts with Mg(2+). A G2 region spans residues 70 to 74 (GVTID). Positions 91–94 (DAPG) are G3. GTP-binding positions include 91 to 95 (DAPGH) and 148 to 151 (NKMD). Residues 148–151 (NKMD) are G4. Positions 187–189 (SGY) are G5.

This sequence belongs to the TRAFAC class translation factor GTPase superfamily. Classic translation factor GTPase family. EF-Tu/EF-1A subfamily.

Its subcellular location is the cytoplasm. It catalyses the reaction GTP + H2O = GDP + phosphate + H(+). Its function is as follows. GTP hydrolase that promotes the GTP-dependent binding of aminoacyl-tRNA to the A-site of ribosomes during protein biosynthesis. The polypeptide is Elongation factor 1-alpha (Picrophilus torridus (strain ATCC 700027 / DSM 9790 / JCM 10055 / NBRC 100828 / KAW 2/3)).